Reading from the N-terminus, the 212-residue chain is uncharacterized protein (212 aa).

The first 21 residues, 1–21, serve as a signal peptide directing secretion; that stretch reads MRRLTAFGLALLLLASGVARG.

This sequence to E.coli YfaT and T.maritima TM0986.

This is an uncharacterized protein from Pseudomonas aeruginosa (strain ATCC 15692 / DSM 22644 / CIP 104116 / JCM 14847 / LMG 12228 / 1C / PRS 101 / PAO1).